We begin with the raw amino-acid sequence, 499 residues long: Ethanolamine-phosphate phospho-lyase (499 aa).

The residue at position 278 (Lys-278) is an N6-(pyridoxal phosphate)lysine. Basic and acidic residues predominate over residues 468–479 (RDSTTDSKENPS). The segment at 468–499 (RDSTTDSKENPSRKRNGMCTDTHSLLSKRLKT) is disordered.

Belongs to the class-III pyridoxal-phosphate-dependent aminotransferase family. Homotetramer. Pyridoxal 5'-phosphate is required as a cofactor.

The protein resides in the mitochondrion. It carries out the reaction phosphoethanolamine + H2O = acetaldehyde + NH4(+) + phosphate. Functionally, catalyzes the pyridoxal-phosphate-dependent breakdown of phosphoethanolamine, converting it to ammonia, inorganic phosphate and acetaldehyde. This is Ethanolamine-phosphate phospho-lyase (ETNPPL) from Homo sapiens (Human).